The following is a 406-amino-acid chain: Succinylornithine transaminase (406 aa).

Lysine 252 is subject to N6-(pyridoxal phosphate)lysine.

The protein belongs to the class-III pyridoxal-phosphate-dependent aminotransferase family. AstC subfamily. Requires pyridoxal 5'-phosphate as cofactor.

The catalysed reaction is N(2)-succinyl-L-ornithine + 2-oxoglutarate = N-succinyl-L-glutamate 5-semialdehyde + L-glutamate. It functions in the pathway amino-acid degradation; L-arginine degradation via AST pathway; L-glutamate and succinate from L-arginine: step 3/5. Functionally, catalyzes the transamination of N(2)-succinylornithine and alpha-ketoglutarate into N(2)-succinylglutamate semialdehyde and glutamate. Can also act as an acetylornithine aminotransferase. The sequence is that of Succinylornithine transaminase from Shigella sonnei (strain Ss046).